The primary structure comprises 1027 residues: MTKEGMLSAAGRRFSRCAPSPRPRRNYALANIPPPAAVHIRTNDMISPEERRFLEAAELGNKPTLQECLDYDGDRRLNVNCLDSMGRTALEIAVDNENMEVVELLLQQPDIRIGNALLCAIREGVYRLVEVLVNHPNITREMLGDGWSQALDPSEAASAEYSSDISPVILAAQLNQFEILQMLIRKDASIEKPHRHSCICETCDRERLNDSLQYSLKRINTFRALASPAWMSLTSPDPILSAFKLSWDLQRLAFEEHEFKETYLQLSEQCKQYSCDLLSQCRSSEEVIAILNKDGNVNDDNIDVWASKLSLSRLKLAIKYEQKAFVSHPHCQQLLTSIWYEGIPYRQRSGTWANFFLYAFLLFLWPIFCLMYILMPKSRLGRLVRSPFMKFFYYSVSFATFLGLLTWATFEDYRYEKGERGGMTRASDRGPPATWVESLVFTWVIGMLWSEIKQLWEEGFKRYMRQWWNWLDFLMICLYLCTISIRLSAYYIFTYREDPYRYTVRTYWTSEEPMLVAEALFAVGNVFSFARIIYLFQTNPYLGPLQISLGCMLVDVAKFCFIFVLIISSFSIGLAQLYWYYDPNTDVCLPGATCKHSSNVFSSIADSYLTLLWSLFSITKPEDTDVVENHKITQWVGQGMFIMYHCTSIIVLLNMLIAMMSHSFQIINDHADLEWKFHRTKLWMAHFDEGSSLPPPFNIIVTPKSLIYVMNCLFNTVRWLLGKYTYQKNRNRATIRRPGYSRKRNEMEKSGGHDDDSLKPLTYADIITRLVARFIHQTKKDMKMDGVNEDDLHEIKQDISSLRYELRDDRRREIVRSSSHIDAVKRDIMRTMSTTSRRPYGGSMRLPKTRPSVAEESEEDDKSDETSSTDEEADETRSRKSSVLYIPPVNSTLPGIISEEAPVKKSTKRRASEADSKLPDRPLSDTYTSSFTPKLLPVFAQPPHSALRKTDTSMSFPINGTALDTSIVKPPRGVLRASQENLPAVELIETLKKEMNEKLDRLISGISENVKSPSPASHSHVGFNVEK.

Positions 1–22 (MTKEGMLSAAGRRFSRCAPSPR) are disordered. 3 ANK repeats span residues 85–115 (MGRT…RIGN), 117–141 (LLCA…ITRE), and 163–192 (SDIS…SIEK). 6 helical membrane passes run 355-375 (FFLY…YILM), 391-411 (FFYY…ATFE), 473-493 (FLMI…YYIF), 516-536 (VAEA…IYLF), 559-579 (FCFI…QLYW), and 640-660 (MFIM…IAMM). Disordered stretches follow at residues 825–929 (KRDI…TYTS) and 1008–1027 (ENVK…NVEK). Residues 855–874 (EESEEDDKSDETSSTDEEAD) are compositionally biased toward acidic residues. The span at 910-923 (RASEADSKLPDRPL) shows a compositional bias: basic and acidic residues. Residues 1008–1017 (ENVKSPSPAS) show a composition bias toward polar residues.

The protein belongs to the transient receptor (TC 1.A.4) family. STrpC subfamily.

The protein localises to the membrane. In terms of biological role, could mediate calcium entry and form a calcium permeant channel. The polypeptide is Transient-receptor-potential-like protein (trp-1) (Caenorhabditis elegans).